The primary structure comprises 259 residues: Undecaprenyl-diphosphatase 4 (259 aa).

8 helical membrane passes run 1 to 21 (MNWL…FLPI), 39 to 59 (AGLF…FIYY), 71 to 91 (FSKL…IGLL), 99 to 119 (ISKT…FLYM), 133 to 153 (ITYK…FPAI), 174 to 194 (AYFS…LQFV), 208 to 228 (SLIV…SWMI), and 239 to 259 (FAYY…TDVF).

This sequence belongs to the UppP family.

It is found in the cell membrane. The enzyme catalyses di-trans,octa-cis-undecaprenyl diphosphate + H2O = di-trans,octa-cis-undecaprenyl phosphate + phosphate + H(+). Functionally, catalyzes the dephosphorylation of undecaprenyl diphosphate (UPP). Confers resistance to bacitracin. The protein is Undecaprenyl-diphosphatase 4 of Bacillus cereus (strain ZK / E33L).